A 142-amino-acid chain; its full sequence is Large ribosomal subunit protein uL13 (142 aa).

This sequence belongs to the universal ribosomal protein uL13 family. In terms of assembly, part of the 50S ribosomal subunit.

Functionally, this protein is one of the early assembly proteins of the 50S ribosomal subunit, although it is not seen to bind rRNA by itself. It is important during the early stages of 50S assembly. This Shewanella frigidimarina (strain NCIMB 400) protein is Large ribosomal subunit protein uL13.